The chain runs to 139 residues: Large-conductance mechanosensitive channel (139 aa).

Helical transmembrane passes span 14 to 34 (VIDL…INSL) and 81 to 101 (GSFL…FMIV).

The protein belongs to the MscL family. In terms of assembly, homopentamer.

The protein resides in the cell membrane. Its function is as follows. Channel that opens in response to stretch forces in the membrane lipid bilayer. May participate in the regulation of osmotic pressure changes within the cell. In Chloroflexus aurantiacus (strain ATCC 29366 / DSM 635 / J-10-fl), this protein is Large-conductance mechanosensitive channel.